The primary structure comprises 719 residues: Pesticidal crystal protein Cry1Ic (719 aa).

This sequence belongs to the delta endotoxin family.

Its function is as follows. Promotes colloidosmotic lysis by binding to the midgut epithelial cells of insects. The sequence is that of Pesticidal crystal protein Cry1Ic (cry1Ic) from Bacillus thuringiensis.